We begin with the raw amino-acid sequence, 84 residues long: Large ribosomal subunit protein bL28 (84 aa).

This sequence belongs to the bacterial ribosomal protein bL28 family.

This chain is Large ribosomal subunit protein bL28, found in Deinococcus geothermalis (strain DSM 11300 / CIP 105573 / AG-3a).